The following is a 147-amino-acid chain: Protein OPG060 (147 aa).

This sequence belongs to the orthopoxvirus OPG058 family.

The chain is Protein OPG060 (OPG060) from Bos taurus (Bovine).